A 585-amino-acid chain; its full sequence is MPKKIHQPGGSLYCGVTLLGVLCLVVFRLIPGIPFGTYVMAERDHYHTIDDPNVPCNFYDTVNLTGHRLFPNGSYDYYGTIVPAELVGTYDYIHSSLTERIEVREHVRGCVCKFKSCLNICCPWRQVFNSEVDGCIIDHSDNRTWPDPPMLNITFRNESTILVNMFTQFAIQSFRPCPKMFSLQPETNNWDDYLLFENGSMLRVDDKLLIRKNEFCMVPTYVNESDMFYTIHPANCDMQDDHSTVKIINSYAMMFSIPFMMLTIAVYLLIPELRNQHGKSLVCYLIGLSVGYSSLCYVQLYQVDATGVTCKVFGYTAYFFFMGAYMWLSVISFDLWHNFRGTRGINRFQEKKRFLFYSLYSWGIALVFLAFTYCAQQLTNLPANLKPGIGDGVYCWLDMSNWAAMIYFYGPILAIVVANTIMFIMTAIKIHGVQREMARIIASENSTKNLRTEKDKRFYRAWSNYRFGLFLRLFLIMGITWLTELISYFVGSDKGWSKLFYISDLANAMQGFLIFMLFVMKKKVKHLITNRCSSVRDGSNQRQSQYSTKTTSSSVANLSLHEKPSVEKPLVISSSVDPQKTTIFR.

Positions 1 to 32 are cleaved as a signal peptide; sequence MPKKIHQPGGSLYCGVTLLGVLCLVVFRLIPG. The Extracellular portion of the chain corresponds to 33–250; sequence IPFGTYVMAE…DHSTVKIINS (218 aa). 5 disulfide bridges follow: Cys56-Cys110, Cys112-Cys117, Cys121-Cys216, Cys122-Cys135, and Cys177-Cys236. Asn63 and Asn72 each carry an N-linked (GlcNAc...) asparagine glycan. Residues Asn142, Asn152, Asn157, Asn198, and Asn223 are each glycosylated (N-linked (GlcNAc...) asparagine). A helical transmembrane segment spans residues 251 to 271; it reads YAMMFSIPFMMLTIAVYLLIP. The Cytoplasmic segment spans residues 272–280; that stretch reads ELRNQHGKS. Residues 281-301 form a helical membrane-spanning segment; that stretch reads LVCYLIGLSVGYSSLCYVQLY. Residues 302–312 lie on the Extracellular side of the membrane; that stretch reads QVDATGVTCKV. A helical membrane pass occupies residues 313-333; the sequence is FGYTAYFFFMGAYMWLSVISF. Over 334 to 353 the chain is Cytoplasmic; the sequence is DLWHNFRGTRGINRFQEKKR. A helical transmembrane segment spans residues 354–374; sequence FLFYSLYSWGIALVFLAFTYC. Residues 375-404 lie on the Extracellular side of the membrane; sequence AQQLTNLPANLKPGIGDGVYCWLDMSNWAA. Residues 405–425 form a helical membrane-spanning segment; the sequence is MIYFYGPILAIVVANTIMFIM. The Cytoplasmic segment spans residues 426-466; it reads TAIKIHGVQREMARIIASENSTKNLRTEKDKRFYRAWSNYR. The helical transmembrane segment at 467-487 threads the bilayer; it reads FGLFLRLFLIMGITWLTELIS. The Extracellular segment spans residues 488–498; that stretch reads YFVGSDKGWSK. Residues 499-519 traverse the membrane as a helical segment; it reads LFYISDLANAMQGFLIFMLFV. Over 520–585 the chain is Cytoplasmic; sequence MKKKVKHLIT…VDPQKTTIFR (66 aa).

This sequence belongs to the G-protein coupled receptor 2 family. Mth subfamily.

It is found in the cell membrane. The sequence is that of Probable G-protein coupled receptor Mth-like 10 (mthl10) from Drosophila melanogaster (Fruit fly).